A 364-amino-acid polypeptide reads, in one-letter code: Putative agmatine deiminase 1 (364 aa).

Residue Cys356 is the Amidino-cysteine intermediate of the active site.

This sequence belongs to the agmatine deiminase family.

It carries out the reaction agmatine + H2O = N-carbamoylputrescine + NH4(+). The sequence is that of Putative agmatine deiminase 1 from Listeria monocytogenes serotype 4b (strain F2365).